We begin with the raw amino-acid sequence, 77 residues long: Acyl carrier protein (77 aa).

The Carrier domain occupies 2–77 (SNIEERVKKI…AAIDYVSKNQ (76 aa)). S37 carries the O-(pantetheine 4'-phosphoryl)serine modification.

The protein belongs to the acyl carrier protein (ACP) family. Post-translationally, 4'-phosphopantetheine is transferred from CoA to a specific serine of apo-ACP by AcpS. This modification is essential for activity because fatty acids are bound in thioester linkage to the sulfhydryl of the prosthetic group.

It localises to the cytoplasm. Its pathway is lipid metabolism; fatty acid biosynthesis. In terms of biological role, carrier of the growing fatty acid chain in fatty acid biosynthesis. This Shewanella oneidensis (strain ATCC 700550 / JCM 31522 / CIP 106686 / LMG 19005 / NCIMB 14063 / MR-1) protein is Acyl carrier protein.